A 113-amino-acid polypeptide reads, in one-letter code: Hydrogenase maturation factor HypA (113 aa).

Histidine 2 contributes to the Ni(2+) binding site. Zn(2+)-binding residues include cysteine 73, cysteine 76, cysteine 89, and cysteine 92.

It belongs to the HypA/HybF family.

Its function is as follows. Involved in the maturation of [NiFe] hydrogenases. Required for nickel insertion into the metal center of the hydrogenase. The chain is Hydrogenase maturation factor HypA from Cereibacter sphaeroides (Rhodobacter sphaeroides).